Consider the following 277-residue polypeptide: Large ribosomal subunit protein uL2 (277 aa).

Positions 215 to 263 are disordered; the sequence is LGRKPHQRGSAMNPVDHPHGGGEGRTGAGRVPVSPWGQPAKGLKTRKKR.

The protein belongs to the universal ribosomal protein uL2 family. Part of the 50S ribosomal subunit. Forms a bridge to the 30S subunit in the 70S ribosome.

One of the primary rRNA binding proteins. Required for association of the 30S and 50S subunits to form the 70S ribosome, for tRNA binding and peptide bond formation. It has been suggested to have peptidyltransferase activity; this is somewhat controversial. Makes several contacts with the 16S rRNA in the 70S ribosome. This chain is Large ribosomal subunit protein uL2, found in Deinococcus geothermalis (strain DSM 11300 / CIP 105573 / AG-3a).